The following is a 327-amino-acid chain: DNA-directed RNA polymerase subunit alpha (327 aa).

Positions 1-233 (MQNSASEFLK…DQLSIFADLQ (233 aa)) are alpha N-terminal domain (alpha-NTD). Residues 247–327 (VDPILLRPVD…NWPPAGLEKP (81 aa)) form an alpha C-terminal domain (alpha-CTD) region.

This sequence belongs to the RNA polymerase alpha chain family. As to quaternary structure, homodimer. The RNAP catalytic core consists of 2 alpha, 1 beta, 1 beta' and 1 omega subunit. When a sigma factor is associated with the core the holoenzyme is formed, which can initiate transcription.

The catalysed reaction is RNA(n) + a ribonucleoside 5'-triphosphate = RNA(n+1) + diphosphate. Its function is as follows. DNA-dependent RNA polymerase catalyzes the transcription of DNA into RNA using the four ribonucleoside triphosphates as substrates. The polypeptide is DNA-directed RNA polymerase subunit alpha (Laribacter hongkongensis (strain HLHK9)).